Reading from the N-terminus, the 480-residue chain is uncharacterized protein (480 aa).

Residues 1 to 21 form the signal peptide; it reads MSRYFSFFFLALFLHYRIIVA. Disordered regions lie at residues 38-72 and 116-147; these read SSHL…SAEC and SPLI…NDQT. The segment covering 51–60 has biased composition (low complexity); it reads LTQSHSSLSD. Positions 133 to 144 are enriched in polar residues; sequence LKTSSEAQGDTN. A helical transmembrane segment spans residues 153 to 173; the sequence is YAVEIACVCFLIALAINYFVG. Positions 404–480 are disordered; it reads QARNKTESGR…VPKMKMSRSH (77 aa). The span at 407 to 465 shows a compositional bias: basic and acidic residues; that stretch reads NKTESGRQKAAEEAYKELHNARQEALQKKKAEKKKMMEEAEAKMSAEVIRKKEAKERAR. Residues 411-467 are a coiled coil; sequence SGRQKAAEEAYKELHNARQEALQKKKAEKKKMMEEAEAKMSAEVIRKKEAKERARQV. Positions 466 to 480 are enriched in basic residues; sequence QVKKAVPKMKMSRSH.

It localises to the membrane. This is an uncharacterized protein from Arabidopsis thaliana (Mouse-ear cress).